The sequence spans 536 residues: Phosphoenolpyruvate carboxykinase (ATP) (536 aa).

Residues Arg61, Tyr195, and Lys201 each contribute to the substrate site. Residues Lys201, His220, and 236–244 (GLSGTGKTT) each bind ATP. 2 residues coordinate Mn(2+): Lys201 and His220. Residue Asp257 coordinates Mn(2+). Residues Glu285, Arg322, and Thr447 each contribute to the ATP site. Arg322 is a substrate binding site.

Belongs to the phosphoenolpyruvate carboxykinase (ATP) family. Mn(2+) is required as a cofactor.

The protein resides in the cytoplasm. The catalysed reaction is oxaloacetate + ATP = phosphoenolpyruvate + ADP + CO2. It participates in carbohydrate biosynthesis; gluconeogenesis. Functionally, involved in the gluconeogenesis. Catalyzes the conversion of oxaloacetate (OAA) to phosphoenolpyruvate (PEP) through direct phosphoryl transfer between the nucleoside triphosphate and OAA. This chain is Phosphoenolpyruvate carboxykinase (ATP), found in Agrobacterium fabrum (strain C58 / ATCC 33970) (Agrobacterium tumefaciens (strain C58)).